Reading from the N-terminus, the 402-residue chain is 8-amino-7-oxononanoate synthase (402 aa).

Position 26 (arginine 26) interacts with substrate. 114-115 (GY) contributes to the pyridoxal 5'-phosphate binding site. Histidine 139 is a substrate binding site. Pyridoxal 5'-phosphate contacts are provided by serine 182, histidine 210, and threonine 239. At lysine 242 the chain carries N6-(pyridoxal phosphate)lysine. Residue threonine 359 coordinates substrate.

The protein belongs to the class-II pyridoxal-phosphate-dependent aminotransferase family. BioF subfamily. In terms of assembly, homodimer. The cofactor is pyridoxal 5'-phosphate.

It carries out the reaction 6-carboxyhexanoyl-[ACP] + L-alanine + H(+) = (8S)-8-amino-7-oxononanoate + holo-[ACP] + CO2. Its pathway is cofactor biosynthesis; biotin biosynthesis. Catalyzes the decarboxylative condensation of pimeloyl-[acyl-carrier protein] and L-alanine to produce 8-amino-7-oxononanoate (AON), [acyl-carrier protein], and carbon dioxide. This is 8-amino-7-oxononanoate synthase from Halorhodospira halophila (strain DSM 244 / SL1) (Ectothiorhodospira halophila (strain DSM 244 / SL1)).